The following is a 367-amino-acid chain: Otolith matrix protein 1 (367 aa).

The signal sequence occupies residues 1 to 23 (MDRLDRRLAATLLLFSFISFSTQ). Residues 27 to 363 (ISWCVVSEAE…YTTVLQAFEC (337 aa)) form the Transferrin-like domain.

It belongs to the transferrin family. As to quaternary structure, interacts with OTOL1. As to expression, expressed in the sacculus during the day.

The protein resides in the secreted. Its function is as follows. Required for normal otolith growth and deposition of otolin-1 in the otolith. This Oncorhynchus mykiss (Rainbow trout) protein is Otolith matrix protein 1 (otomp).